We begin with the raw amino-acid sequence, 506 residues long: EPTC-inducible aldehyde dehydrogenase (506 aa).

Residue 219–225 coordinates NAD(+); that stretch reads GFGVEAG. Residues E263 and C302 contribute to the active site.

It belongs to the aldehyde dehydrogenase family.

The catalysed reaction is an aldehyde + NAD(+) + H2O = a carboxylate + NADH + 2 H(+). Degrades all aldehydes potentially generated by N dealkylation of thiocarbamates and may also participate in ethanolamine metabolism and further assimilation of degradation products by thiocarbamate-induced cytochrome P-450. In Rhodococcus erythropolis (Arthrobacter picolinophilus), this protein is EPTC-inducible aldehyde dehydrogenase (thcA).